We begin with the raw amino-acid sequence, 178 residues long: Tetratricopeptide repeat protein 9C (178 aa).

TPR repeat units follow at residues 15–48 (ASSF…LRSL), 79–114 (ADCY…QPEN), and 115–148 (VKAL…APKD).

This sequence belongs to the TTC9 family.

In Xenopus tropicalis (Western clawed frog), this protein is Tetratricopeptide repeat protein 9C (ttc9c).